The following is a 478-amino-acid chain: MMKMKQQGLVADLLPNIRVMKTFGHFVFNYYNDNSSKYLHKVYCCVNLFMLLLQFGLCAVNLIVESADVDDLTANTITLLFFTHSIVKICYFAIRSKYFYRTWAIWNNPNSHPLFAESNARYHAIALKKMRLLLFLVGGTTMLAAVAWTVLTFFEHPIRKIVDPVTNETEIIELPQLLIRSFYPFDAGKGITHVLVLVYQFYWVLFMLIDANSLDVLFCSWLLFACEQLQHLKQIMKPLMELSATLDTVVPNSSELFKAGSADHLRDGDNPPPPPPPQSDNMLDLDLRNIYSNRQDFTATFRPTAGMTFNGGVGPNGLTKKQEALVRSAIKYWVERHKHIVRLVTAVGDAYGFALLLHMLTTTITLTLLAYQATKVNGINVYAASTIGYILYTFGQVFLFCIFGNRLIEESTSVMEAAYSCHWYDGSEEAKTFVQIVCQQCQKAMSISGAKFFTVSLDLFASVLGAVVTYFMVLVQLK.

Residues 1-43 (MMKMKQQGLVADLLPNIRVMKTFGHFVFNYYNDNSSKYLHKVY) lie on the Cytoplasmic side of the membrane. The helical transmembrane segment at 44–64 (CCVNLFMLLLQFGLCAVNLIV) threads the bilayer. The Extracellular portion of the chain corresponds to 65–73 (ESADVDDLT). The chain crosses the membrane as a helical span at residues 74–94 (ANTITLLFFTHSIVKICYFAI). Residues 95–133 (RSKYFYRTWAIWNNPNSHPLFAESNARYHAIALKKMRLL) are Cytoplasmic-facing. A helical membrane pass occupies residues 134-154 (LFLVGGTTMLAAVAWTVLTFF). At 155–190 (EHPIRKIVDPVTNETEIIELPQLLIRSFYPFDAGKG) the chain is on the extracellular side. N167 carries an N-linked (GlcNAc...) asparagine glycan. A helical membrane pass occupies residues 191-211 (ITHVLVLVYQFYWVLFMLIDA). Topologically, residues 212-349 (NSLDVLFCSW…IVRLVTAVGD (138 aa)) are cytoplasmic. The interval 261-281 (SADHLRDGDNPPPPPPPQSDN) is disordered. The helical transmembrane segment at 350 to 370 (AYGFALLLHMLTTTITLTLLA) threads the bilayer. Topologically, residues 371–382 (YQATKVNGINVY) are extracellular. A helical transmembrane segment spans residues 383-403 (AASTIGYILYTFGQVFLFCIF). The Cytoplasmic segment spans residues 404–454 (GNRLIEESTSVMEAAYSCHWYDGSEEAKTFVQIVCQQCQKAMSISGAKFFT). Residues 455-475 (VSLDLFASVLGAVVTYFMVLV) traverse the membrane as a helical segment. Topologically, residues 476-478 (QLK) are extracellular.

Belongs to the insect chemoreceptor superfamily. Heteromeric odorant receptor channel (TC 1.A.69) family. Orco subfamily. Heterodimer with conventional odorant receptors (ORs). As to expression, present in antennae (at protein level).

Its subcellular location is the cell membrane. Functionally, odorant coreceptor which complexes with conventional odorant receptors (ORs) to form odorant-sensing units, providing sensitive and prolonged odorant signaling and calcium permeability. Obligate coreceptor of all odorant receptors. Orco is a universal and integral part of the functional odorant receptor, involved in the dendritic localization of other olfactory receptors. Can form functional ion channels in the absence of an odor-binding odorant receptor. Plays a central role in the perception of olfactory stimuli in ants and is essential for ant social organization. Required for pheromone sensing. Also required for the development and maintenance of odorant receptor neurons (ORNs) and of antennal lobe glomeruli. The sequence is that of Odorant receptor coreceptor from Ooceraea biroi (Clonal raider ant).